Consider the following 194-residue polypeptide: Protein GrpE (194 aa).

Residues 1 to 13 (MENTQENPTSQNP) are compositionally biased toward polar residues. Residues 1-50 (MENTQENPTSQNPKPAEETARQAAEAAAPQQEAAANAATDSPASAEQAAL) form a disordered region. Low complexity predominate over residues 21-50 (RQAAEAAAPQQEAAANAATDSPASAEQAAL).

The protein belongs to the GrpE family. In terms of assembly, homodimer.

It localises to the cytoplasm. In terms of biological role, participates actively in the response to hyperosmotic and heat shock by preventing the aggregation of stress-denatured proteins, in association with DnaK and GrpE. It is the nucleotide exchange factor for DnaK and may function as a thermosensor. Unfolded proteins bind initially to DnaJ; upon interaction with the DnaJ-bound protein, DnaK hydrolyzes its bound ATP, resulting in the formation of a stable complex. GrpE releases ADP from DnaK; ATP binding to DnaK triggers the release of the substrate protein, thus completing the reaction cycle. Several rounds of ATP-dependent interactions between DnaJ, DnaK and GrpE are required for fully efficient folding. This chain is Protein GrpE, found in Paraburkholderia xenovorans (strain LB400).